The following is a 378-amino-acid chain: Putative glutamate--cysteine ligase 2 (378 aa).

The protein belongs to the glutamate--cysteine ligase type 2 family. YbdK subfamily.

The catalysed reaction is L-cysteine + L-glutamate + ATP = gamma-L-glutamyl-L-cysteine + ADP + phosphate + H(+). ATP-dependent carboxylate-amine ligase which exhibits weak glutamate--cysteine ligase activity. The protein is Putative glutamate--cysteine ligase 2 of Jannaschia sp. (strain CCS1).